The chain runs to 39 residues: Photosystem II reaction center protein J (39 aa).

Residues 9–29 (LWIIATFGGIAALTVVGLFIY) traverse the membrane as a helical segment.

It belongs to the PsbJ family. As to quaternary structure, PSII is composed of 1 copy each of membrane proteins PsbA, PsbB, PsbC, PsbD, PsbE, PsbF, PsbH, PsbI, PsbJ, PsbK, PsbL, PsbM, PsbT, PsbX, PsbY, PsbZ, Psb30/Ycf12, at least 3 peripheral proteins of the oxygen-evolving complex and a large number of cofactors. It forms dimeric complexes.

Its subcellular location is the plastid. It is found in the chloroplast thylakoid membrane. Functionally, one of the components of the core complex of photosystem II (PSII). PSII is a light-driven water:plastoquinone oxidoreductase that uses light energy to abstract electrons from H(2)O, generating O(2) and a proton gradient subsequently used for ATP formation. It consists of a core antenna complex that captures photons, and an electron transfer chain that converts photonic excitation into a charge separation. This chain is Photosystem II reaction center protein J, found in Guillardia theta (Cryptophyte).